The sequence spans 237 residues: Lectin alpha chain (237 aa).

Residues Glu8 and Asp10 each coordinate Mn(2+). The Ca(2+) site is built by Asp10, Tyr12, Asn14, and Asp19. Tyr12 serves as a coordination point for a carbohydrate. The Mn(2+) site is built by Asp19, His24, and Ser34. 99–100 (LY) serves as a coordination point for a carbohydrate. Position 208 (Asp208) interacts with Ca(2+). Arg228 contributes to the a carbohydrate binding site.

The protein belongs to the leguminous lectin family. In terms of assembly, equilibrium between homodimer and homotetramer. Oligomerization is pH-dependent with homotetramers forming at pH 6.5 and above. Post-translationally, the beta and gamma chains are produced by partial proteolytic processing of the lectin alpha chain by an asparaginyl endopeptidase. Mixture of 60% alpha lectin and 40% of its beta and gamma proteolytic fragments.

In terms of biological role, D-mannose/D-glucose-binding lectin. Has anti-inflammatory activity in rats. Induces histamine release in mast cells from rat. Induces lymphocyte proliferation and IFNG production. This Dioclea guianensis protein is Lectin alpha chain.